We begin with the raw amino-acid sequence, 102 residues long: Small ribosomal subunit protein uS10 (102 aa).

Belongs to the universal ribosomal protein uS10 family. As to quaternary structure, part of the 30S ribosomal subunit.

Its function is as follows. Involved in the binding of tRNA to the ribosomes. The protein is Small ribosomal subunit protein uS10 of Sulfolobus acidocaldarius (strain ATCC 33909 / DSM 639 / JCM 8929 / NBRC 15157 / NCIMB 11770).